Here is a 309-residue protein sequence, read N- to C-terminus: Virulence regulon transcriptional activator VirB (309 aa).

Positions Lys152 to Ala171 form a DNA-binding region, H-T-H motif.

It belongs to the ParB family.

Transcription activator for the invasion antigens IpaB, IpaC and IpaD. VirB is itself regulated by VirF. In Shigella flexneri, this protein is Virulence regulon transcriptional activator VirB (virB).